The sequence spans 330 residues: Malate dehydrogenase (330 aa).

Position 11–17 (11–17) interacts with NAD(+); that stretch reads GGAGQIA. Arginine 92 and arginine 98 together coordinate substrate. NAD(+)-binding positions include asparagine 105, glutamine 112, and 129–131; that span reads VGN. Substrate-binding residues include asparagine 131 and arginine 162. The Proton acceptor role is filled by histidine 187.

This sequence belongs to the LDH/MDH superfamily. MDH type 2 family.

It catalyses the reaction (S)-malate + NAD(+) = oxaloacetate + NADH + H(+). Its function is as follows. Catalyzes the reversible oxidation of malate to oxaloacetate. In Protochlamydia amoebophila (strain UWE25), this protein is Malate dehydrogenase.